Here is a 131-residue protein sequence, read N- to C-terminus: Small ribosomal subunit protein uS8 (131 aa).

This sequence belongs to the universal ribosomal protein uS8 family. As to quaternary structure, part of the 30S ribosomal subunit. Contacts proteins S5 and S12.

In terms of biological role, one of the primary rRNA binding proteins, it binds directly to 16S rRNA central domain where it helps coordinate assembly of the platform of the 30S subunit. This Burkholderia mallei (strain NCTC 10247) protein is Small ribosomal subunit protein uS8.